The primary structure comprises 941 residues: RNA-directed RNA polymerase (941 aa).

Residues 875–918 are disordered; sequence SARQGGMGLPPPPPPPLGGGGMAGPPPPPFMGLRPESSVPTSVP. Positions 905–918 are enriched in low complexity; that stretch reads MGLRPESSVPTSVP.

In terms of assembly, forms a ribonucleoprotein complex with the 23S RNA, where a single polymerase molecule binds to a single viral RNA genome. Since the viral RNA is not encapsidated, ribonucleoprotein complex formation appears to be the strategy to survive in the host as persistent virus.

It localises to the host cytoplasm. The catalysed reaction is RNA(n) + a ribonucleoside 5'-triphosphate = RNA(n+1) + diphosphate. Its function is as follows. RNA-directed RNA polymerase that replicates the viral (+) and (-) genome. The polypeptide is RNA-directed RNA polymerase (Saccharomyces 23S RNA narnavirus (ScNV-23S)).